The sequence spans 465 residues: uncharacterized protein (465 aa).

Residues 87 to 112 (KTSQQIDSSPPQTPTTSNGSMMTRRQ) show a composition bias toward polar residues. 2 disordered regions span residues 87–169 (KTSQ…SYDD) and 201–244 (EGYI…NNIF). A compositionally biased stretch (low complexity) spans 113 to 139 (NANNAISSNNNTNTNVTNGSSSNTSLN). The span at 141 to 157 (GDEEQEEEEEEENDEDS) shows a compositional bias: acidic residues. Residues 217-244 (NRNNNNNNINKNNNNNINNNNNNNNNIF) are compositionally biased toward low complexity.

This is an uncharacterized protein from Dictyostelium discoideum (Social amoeba).